The primary structure comprises 187 residues: EP300-interacting inhibitor of differentiation 1 (187 aa).

Positions 1 to 118 (MSEMAELSEL…YDYPEEEQLS (118 aa)) are disordered. Acidic residues-rich tracts occupy residues 52-63 (LEEEGPMEEEEA) and 93-116 (FESE…EEEQ). The interval 54 to 120 (EEGPMEEEEA…YPEEEQLSGA (67 aa)) is interaction with NR0B2. The LXCXE motif signature appears at 178–182 (LGCDE).

Interacts via its LXCXE motif with the entire pocket region of RB1. Interacts with EP300, NR0B2 and TRIM27. Post-translationally, ubiquitinated in U2OS osteosarcoma cells and is rapidly degraded by proteasome as cells exit the cell cycle exit. In terms of tissue distribution, widely expressed. Most abundantly expressed in heart, skeletal muscle, pancreas, brain and testis. Expressed at much lower levels in placenta and peripheral blood leukocyte. Barely detectable in lung. Also weakly expressed in lung carcinoma A-549 and various leukemia cell lines.

It localises to the nucleus. It is found in the cytoplasm. Its function is as follows. Interacts with RB1 and EP300 and acts as a repressor of MYOD1 transactivation. Inhibits EP300 and CBP histone acetyltransferase activity. May be involved in coupling cell cycle exit to the transcriptional activation of genes required for cellular differentiation. May act as a candidate coinhibitory factor for NR0B2 that can be directly linked to transcription inhibitory mechanisms. In Homo sapiens (Human), this protein is EP300-interacting inhibitor of differentiation 1.